A 365-amino-acid polypeptide reads, in one-letter code: Putative nudix hydrolase 1 (365 aa).

One can recognise a Nudix hydrolase domain in the interval 72–201 (VNYVAAAIIL…DFIRLVDEAV (130 aa)). A Nudix box motif is present at residues 109–130 (GRVEAGETIEEAVVREVKEETG). Mg(2+) contacts are provided by Glu124 and Glu128.

The protein belongs to the Nudix hydrolase family. The cofactor is Mg(2+). Mn(2+) is required as a cofactor.

Its function is as follows. Probably mediates the hydrolysis of some nucleoside diphosphate derivatives. In Caenorhabditis elegans, this protein is Putative nudix hydrolase 1 (ndx-1).